We begin with the raw amino-acid sequence, 214 residues long: Phosphatidylserine decarboxylase proenzyme (214 aa).

The active-site Schiff-base intermediate with substrate; via pyruvic acid is the Ser-183. A Pyruvic acid (Ser); by autocatalysis modification is found at Ser-183.

This sequence belongs to the phosphatidylserine decarboxylase family. PSD-A subfamily. As to quaternary structure, heterodimer of a large membrane-associated beta subunit and a small pyruvoyl-containing alpha subunit. Pyruvate serves as cofactor. In terms of processing, is synthesized initially as an inactive proenzyme. Formation of the active enzyme involves a self-maturation process in which the active site pyruvoyl group is generated from an internal serine residue via an autocatalytic post-translational modification. Two non-identical subunits are generated from the proenzyme in this reaction, and the pyruvate is formed at the N-terminus of the alpha chain, which is derived from the carboxyl end of the proenzyme. The post-translation cleavage follows an unusual pathway, termed non-hydrolytic serinolysis, in which the side chain hydroxyl group of the serine supplies its oxygen atom to form the C-terminus of the beta chain, while the remainder of the serine residue undergoes an oxidative deamination to produce ammonia and the pyruvoyl prosthetic group on the alpha chain.

Its subcellular location is the cell membrane. It carries out the reaction a 1,2-diacyl-sn-glycero-3-phospho-L-serine + H(+) = a 1,2-diacyl-sn-glycero-3-phosphoethanolamine + CO2. The protein operates within phospholipid metabolism; phosphatidylethanolamine biosynthesis; phosphatidylethanolamine from CDP-diacylglycerol: step 2/2. In terms of biological role, catalyzes the formation of phosphatidylethanolamine (PtdEtn) from phosphatidylserine (PtdSer). This is Phosphatidylserine decarboxylase proenzyme from Syntrophotalea carbinolica (strain DSM 2380 / NBRC 103641 / GraBd1) (Pelobacter carbinolicus).